The sequence spans 1756 residues: RANBP2-like and GRIP domain-containing protein 2 (1756 aa).

Position 21 is a phosphoserine (S21). 3 TPR repeats span residues 59-92, 583-616, and 647-680; these read PRAH…NPPQ, QKMG…LKII, and EDAH…VSYW. The interval 759–804 is disordered; it reads GPLYKNGSLRNADSEIKHSTPSPTKYSLSPSKSYKYSPKTPPRWAE. A compositionally biased stretch (low complexity) spans 777 to 796; sequence STPSPTKYSLSPSKSYKYSP. Residues 1029–1165 form the RanBD1 1 domain; sequence HFEPVVQMPE…FEECQRLLLD (137 aa). Disordered regions lie at residues 1206 to 1241 and 1299 to 1324; these read TKVT…TLEW and AKLN…ERDG. Residues 1228-1237 are compositionally biased toward polar residues; it reads IKPNPENTGP. The segment covering 1310–1322 has biased composition (acidic residues); it reads TDEESDVTQEEER. Positions 1326–1462 constitute a RanBD1 2 domain; the sequence is YFEPVVPLPD…FDEAKTAQEK (137 aa). The segment covering 1573-1586 has biased composition (polar residues); it reads NDSETSSVAQSGSE. The tract at residues 1573–1614 is disordered; the sequence is NDSETSSVAQSGSESKVEPKKCELSKNSDIEQSSDSKVKNLS. Positions 1587–1610 are enriched in basic and acidic residues; the sequence is SKVEPKKCELSKNSDIEQSSDSKV. Residues 1693-1743 enclose the GRIP domain; sequence QEESAANVEHLKNVLLQFIFLKPGSERESLLPVINTMLQLSPEEKGKLAAV.

This Homo sapiens (Human) protein is RANBP2-like and GRIP domain-containing protein 2 (RGPD2).